A 1032-amino-acid polypeptide reads, in one-letter code: Unconventional myosin-Ih (1032 aa).

The region spanning 12-701 (GVQDFVLLDA…TLFATEDAFE (690 aa)) is the Myosin motor domain. ATP is bound at residue 105 to 112 (GESGAGKT). S365 carries the post-translational modification Phosphoserine. The actin-binding stretch occupies residues 578 to 600 (LSSLLETLISKEPSYIRCIKPND). IQ domains lie at 704-726 (KHQLVARIQATYKRCLGRREYVK) and 727-756 (KRQAAIKLEAHWRGALARKAIQRRKWAVRI). Residues 855–1029 (KDGYTESLNQ…NGQLTVVSVR (175 aa)) enclose the TH1 domain.

This sequence belongs to the TRAFAC class myosin-kinesin ATPase superfamily. Myosin family.

Its function is as follows. Myosins are actin-based motor molecules with ATPase activity. Unconventional myosins serve in intracellular movements. Their highly divergent tails are presumed to bind to membranous compartments, which would be moved relative to actin filaments. This is Unconventional myosin-Ih (MYO1H) from Homo sapiens (Human).